The following is a 512-amino-acid chain: ATP synthase subunit alpha (512 aa).

169–176 (GDRQTGKT) is a binding site for ATP.

This sequence belongs to the ATPase alpha/beta chains family. F-type ATPases have 2 components, CF(1) - the catalytic core - and CF(0) - the membrane proton channel. CF(1) has five subunits: alpha(3), beta(3), gamma(1), delta(1), epsilon(1). CF(0) has three main subunits: a(1), b(2) and c(9-12). The alpha and beta chains form an alternating ring which encloses part of the gamma chain. CF(1) is attached to CF(0) by a central stalk formed by the gamma and epsilon chains, while a peripheral stalk is formed by the delta and b chains.

The protein resides in the cell membrane. The enzyme catalyses ATP + H2O + 4 H(+)(in) = ADP + phosphate + 5 H(+)(out). Produces ATP from ADP in the presence of a proton gradient across the membrane. The alpha chain is a regulatory subunit. This chain is ATP synthase subunit alpha, found in Elusimicrobium minutum (strain Pei191).